The primary structure comprises 710 residues: Elongation factor G (710 aa).

The 290-residue stretch at 8–297 folds into the tr-type G domain; it reads ERVRNIGIAA…AVVDYLPSPI (290 aa). GTP is bound by residues 17 to 24, 96 to 100, and 150 to 153; these read AHIDAGKT, DTPGH, and NKMD.

It belongs to the TRAFAC class translation factor GTPase superfamily. Classic translation factor GTPase family. EF-G/EF-2 subfamily.

It localises to the cytoplasm. Functionally, catalyzes the GTP-dependent ribosomal translocation step during translation elongation. During this step, the ribosome changes from the pre-translocational (PRE) to the post-translocational (POST) state as the newly formed A-site-bound peptidyl-tRNA and P-site-bound deacylated tRNA move to the P and E sites, respectively. Catalyzes the coordinated movement of the two tRNA molecules, the mRNA and conformational changes in the ribosome. This chain is Elongation factor G, found in Synechococcus sp. (strain JA-3-3Ab) (Cyanobacteria bacterium Yellowstone A-Prime).